We begin with the raw amino-acid sequence, 403 residues long: D-galactonate dehydratase family member ManD (403 aa).

Asparagine 37 and histidine 122 together coordinate substrate. The Proton donor/acceptor role is filled by tyrosine 159. Aspartate 211 provides a ligand contact to Mg(2+). Residue histidine 213 is the Proton donor/acceptor of the active site. Glutamate 237 and glutamate 263 together coordinate Mg(2+). Positions 263, 284, 313, 317, and 340 each coordinate substrate.

The protein belongs to the mandelate racemase/muconate lactonizing enzyme family. GalD subfamily. Requires Mg(2+) as cofactor.

The enzyme catalyses D-mannonate = 2-dehydro-3-deoxy-D-gluconate + H2O. The catalysed reaction is D-gluconate = 2-dehydro-3-deoxy-D-gluconate + H2O. Functionally, has low dehydratase activity with D-mannonate and D-gluconate, suggesting that these are not physiological substrates and that it has no significant role in the in vivo degradation of these compounds. Has no detectable activity with a panel of 70 other acid sugars (in vitro). The protein is D-galactonate dehydratase family member ManD (manD) of Chromohalobacter salexigens (strain ATCC BAA-138 / DSM 3043 / CIP 106854 / NCIMB 13768 / 1H11).